The following is a 261-amino-acid chain: Cytochrome c oxidase subunit 3 (261 aa).

Topologically, residues 1–15 (MTHQTHAYHMVNPSP) are mitochondrial matrix. A helical membrane pass occupies residues 16 to 34 (WPLTGALSALLMTSGLIMW). Residues 35–40 (FHFNSM) are Mitochondrial intermembrane-facing. A helical membrane pass occupies residues 41–66 (YLLMLGLTTNTLTMYQWWRDIVREST). At 67–72 (FQGHHT) the chain is on the mitochondrial matrix side. The helical transmembrane segment at 73-105 (PIVQKGLRYGMILFIVSEVFFFAGFFWAFYHSS) threads the bilayer. Over 106–128 (LAPTPELGGCWPPTGITPLNPME) the chain is Mitochondrial intermembrane. A helical transmembrane segment spans residues 129 to 152 (VPLLNTSVLLASGVSITWAHHSLM). At 153-155 (EGN) the chain is on the mitochondrial matrix side. Residues 156 to 183 (RKHMLQALFITISLGIYFTLLQASEYYE) form a helical membrane-spanning segment. The Mitochondrial intermembrane segment spans residues 184–190 (TPFTISD). A helical membrane pass occupies residues 191–223 (GIYGSTFFMATGFHGLHVIIGSTFLIVCFVRQL). Residues 224-232 (KFHFTSNHH) are Mitochondrial matrix-facing. The chain crosses the membrane as a helical span at residues 233 to 256 (FGFEAAAWYWHFVDVVWLFLYVSI). Residues 257–261 (YWWGS) are Mitochondrial intermembrane-facing.

It belongs to the cytochrome c oxidase subunit 3 family. In terms of assembly, component of the cytochrome c oxidase (complex IV, CIV), a multisubunit enzyme composed of 14 subunits. The complex is composed of a catalytic core of 3 subunits MT-CO1, MT-CO2 and MT-CO3, encoded in the mitochondrial DNA, and 11 supernumerary subunits COX4I, COX5A, COX5B, COX6A, COX6B, COX6C, COX7A, COX7B, COX7C, COX8 and NDUFA4, which are encoded in the nuclear genome. The complex exists as a monomer or a dimer and forms supercomplexes (SCs) in the inner mitochondrial membrane with NADH-ubiquinone oxidoreductase (complex I, CI) and ubiquinol-cytochrome c oxidoreductase (cytochrome b-c1 complex, complex III, CIII), resulting in different assemblies (supercomplex SCI(1)III(2)IV(1) and megacomplex MCI(2)III(2)IV(2)).

Its subcellular location is the mitochondrion inner membrane. The enzyme catalyses 4 Fe(II)-[cytochrome c] + O2 + 8 H(+)(in) = 4 Fe(III)-[cytochrome c] + 2 H2O + 4 H(+)(out). In terms of biological role, component of the cytochrome c oxidase, the last enzyme in the mitochondrial electron transport chain which drives oxidative phosphorylation. The respiratory chain contains 3 multisubunit complexes succinate dehydrogenase (complex II, CII), ubiquinol-cytochrome c oxidoreductase (cytochrome b-c1 complex, complex III, CIII) and cytochrome c oxidase (complex IV, CIV), that cooperate to transfer electrons derived from NADH and succinate to molecular oxygen, creating an electrochemical gradient over the inner membrane that drives transmembrane transport and the ATP synthase. Cytochrome c oxidase is the component of the respiratory chain that catalyzes the reduction of oxygen to water. Electrons originating from reduced cytochrome c in the intermembrane space (IMS) are transferred via the dinuclear copper A center (CU(A)) of subunit 2 and heme A of subunit 1 to the active site in subunit 1, a binuclear center (BNC) formed by heme A3 and copper B (CU(B)). The BNC reduces molecular oxygen to 2 water molecules using 4 electrons from cytochrome c in the IMS and 4 protons from the mitochondrial matrix. The polypeptide is Cytochrome c oxidase subunit 3 (MT-CO3) (Phoca vitulina (Harbor seal)).